Consider the following 148-residue polypeptide: Arginine repressor (148 aa).

It belongs to the ArgR family.

The protein localises to the cytoplasm. It functions in the pathway amino-acid biosynthesis; L-arginine biosynthesis [regulation]. Regulates arginine biosynthesis genes. In Chloroherpeton thalassium (strain ATCC 35110 / GB-78), this protein is Arginine repressor.